The sequence spans 357 residues: Heat-inducible transcription repressor HrcA (357 aa).

It belongs to the HrcA family.

Its function is as follows. Negative regulator of class I heat shock genes (grpE-dnaK-dnaJ and groELS operons). Prevents heat-shock induction of these operons. The protein is Heat-inducible transcription repressor HrcA of Chlorobium limicola (strain DSM 245 / NBRC 103803 / 6330).